The chain runs to 879 residues: Alanine--tRNA ligase (879 aa).

His564, His568, Cys666, and His670 together coordinate Zn(2+).

The protein belongs to the class-II aminoacyl-tRNA synthetase family. Zn(2+) serves as cofactor.

It is found in the cytoplasm. It carries out the reaction tRNA(Ala) + L-alanine + ATP = L-alanyl-tRNA(Ala) + AMP + diphosphate. Catalyzes the attachment of alanine to tRNA(Ala) in a two-step reaction: alanine is first activated by ATP to form Ala-AMP and then transferred to the acceptor end of tRNA(Ala). Also edits incorrectly charged Ser-tRNA(Ala) and Gly-tRNA(Ala) via its editing domain. The polypeptide is Alanine--tRNA ligase (Crocosphaera subtropica (strain ATCC 51142 / BH68) (Cyanothece sp. (strain ATCC 51142))).